The following is a 414-amino-acid chain: Serine hydroxymethyltransferase (414 aa).

(6S)-5,6,7,8-tetrahydrofolate is bound by residues L121 and 125 to 127 (GHL). At K229 the chain carries N6-(pyridoxal phosphate)lysine.

Belongs to the SHMT family. Homodimer. Pyridoxal 5'-phosphate serves as cofactor.

It is found in the cytoplasm. It catalyses the reaction (6R)-5,10-methylene-5,6,7,8-tetrahydrofolate + glycine + H2O = (6S)-5,6,7,8-tetrahydrofolate + L-serine. The protein operates within one-carbon metabolism; tetrahydrofolate interconversion. Its pathway is amino-acid biosynthesis; glycine biosynthesis; glycine from L-serine: step 1/1. Catalyzes the reversible interconversion of serine and glycine with tetrahydrofolate (THF) serving as the one-carbon carrier. This reaction serves as the major source of one-carbon groups required for the biosynthesis of purines, thymidylate, methionine, and other important biomolecules. Also exhibits THF-independent aldolase activity toward beta-hydroxyamino acids, producing glycine and aldehydes, via a retro-aldol mechanism. This chain is Serine hydroxymethyltransferase, found in Verminephrobacter eiseniae (strain EF01-2).